A 2202-amino-acid chain; its full sequence is MNLTLTTTSITIQPSATMANRAPTLLDHFHDQLQKHSSSVAIEDGTQSADQGAWERVTYAQLDALSDSWSKRLRQAGVGAGCIVPLLSKRSVAMVAATLAILKLRAAYVSIDIDSWGKDRIDTVLKTVNPQIIVSTSPCPKDHYPYPVVALERNDFDETVTSNGTQWTRNDEDSIDRGNDLAYIIFTSGTTGIPKGVKIGQRSISRYVKEGGDLPFNFNTTHGTRVLLICSIAFDVCAGVMFNTLCNGGTLVLADPSTFETAAKTCHVLPLTPSILVTLDPKAGFDTVEKIFLGGESPSPSLIEAWSSPRRRLYNAYGPTETTCTAFMGELLPGSPITIGYPISYSTVTLLDEDGMESVEGEICIAGLGLALGYFHDPERTNSAFVEWNGVRIYKTGDYGRRTKHGLQFCGRRDSVVKNRGFLINLEADVEPALLSYDKVDSASAFMSQGQLIAFVTPTSAKEGLREYLANTVSSFLVPDTIYSLDEFPRTSNGKVDRRSLMRMHELEQGSDTASLERGLGAVESVRRGLSHVLRLPESQILPASSFRHLGGHSLAAVMLVSVLRRMGFGISVAEVLLLDTVENIAAAVVELSDIPHALSAQEDLIERLRHDISTTRPLDEGVTIAPMTDMQTRLLGASVATPGLSFIKTSFTLDHPEKEDLTSTLRAAWVRLHQTHEILRTAFVLTASNGTQIISQEPDFSWKEKFVTESEWESVCRREEHLDVADFPDFDAENRASLSRVVLIIAPRRRTRFVWTVHHSLIDGWSMATLMRDFASCLDGKPIPAPPQFAQVAQAIGQLKAESSDRAVSFWKEYLDGYTPAQRLRVSPPSDVSDYTQAALSRKLTVSVSALEDAARDRFAVTPATLLYAAWGLLLSRYSGTDRAALGAVLSGRSLPIPGVENIIGPLINTLPLAINTQEAQSTYSFVQSVFRRLCDILEFQWSPVALIQEGCGCNPSELFETLFALQYDFPQTPWKSSEVPEPRDIRYEEATQVPLTVLLDNANGQFEVRFIYRRSHFGDATVQRMIGQFGNLLENLIAAQPDTDLSNVTGQMFNNRVYEMSIAKPGQPVSACKVPESLTEAIENSIQAHPDIYAVEGLTGRLTYREFGRMTEHISQRLLQHIQPGSVACMISDGSLLWLLAMVAIIRAGAIYCPVDEKLPRDRKDYMVRNSRAALILYANSSQEPLCNGVPSLNMESIMQEISSSSGSPIATSRNRPSGDTVACLVYTSGSTGLPKAVQLQHKGILNVISQPEGRLYSRPGQRNAQMLSLGFDCCIKEVFSTICFGATLVLKDPENPISHLARVDATMATPSLLATLEPTDYPNLKVITVAGEAVSQVLNDKWAAGRTLINGYGPAECTLISTTAILHPGNRVSIGKPLPGLSCYLLDSNKRPVPMGVSGEIYISGVQVTPGYLHNEQETSKRFLSDSFNPGQVMYRTGDIGRMLEDGNIEYIGREDNQIKLRGFRIDLGEVQSTISKLASTASNVALIVSNGNLVAFMTPETIDVRSLAKSLETQLPQYAVPNRIIALATLPTSANNKVDSSALQRYLRDHGKDGAVVEDLETDTQRVLAVIWADMLGRDLNQTPISPSDRFFELGGHSLLQIKVAQAISKRWNIRPLPLKQVIRHHSLQDLSLAIDELVSDPRTVSTMPFLEMTPVARNGQLPLSYLEKEMLLNHLISGGSPAGNMNFVCKIRGDINAETLADAFQRVTADVEVFRTRYSVIEGTLFRQQAPGSVKVPRVVQTGNLSSFVHGRITKSFDLSTEPPVDVSIIIGTPMQAMLVVVMSHVVGDAATMATYLNRVSRTYDLLRSNSQTTNTSTVPDNLTYIDWAHWASTLQPNPRALTFWSSYLSNPPSPLTFGNPSPAPATYIGLTRSWTLPPSMYRKLSDLAAKASVTMHQLILAAVFFSLQCVDRRDDILVAAPFTHRTEPGTESLPGLFLDRLLLRIQRSPHQSSIFDFLSSVRETSQQALAHVIPFHTLRHSLAHKPSLIDPLFKVMVTYHTAADQRPLLDLSGAEVQPIPWRHTGGSKFPLKFEFTEMATQDLEVDMEYDLGCIREDIALRLEFALSFALQLMVLERETDDIIQLVQMSFCPGEGSPVGLTPSHEGSAELTNGTNKTDSTTGQQELENNLTDVVCECLGLEIQDVDADKSFWDLGAQSMDALKLQHLCEKRGVRVRLRDIFVSRSLLELATCAVII.

Positions 58–443 (TYAQLDALSD…LLSYDKVDSA (386 aa)) are adenylation 1. Residues 517–593 (ERGLGAVESV…NIAAAVVELS (77 aa)) form the Carrier 1 domain. Residue serine 554 is modified to O-(pantetheine 4'-phosphoryl)serine. The segment at 625 to 918 (IAPMTDMQTR…INTLPLAINT (294 aa)) is condensation 1. Residues 1105–1482 (TYREFGRMTE…EVQSTISKLA (378 aa)) are adenylation 2. The Carrier 2 domain occupies 1563 to 1643 (DLETDTQRVL…DLSLAIDELV (81 aa)). Position 1602 is an O-(pantetheine 4'-phosphoryl)serine (serine 1602). Residues 1664–1952 (GQLPLSYLEK…FLDRLLLRIQ (289 aa)) form a condensation 2 region. The disordered stretch occupies residues 2103–2129 (PVGLTPSHEGSAELTNGTNKTDSTTGQ). The segment covering 2115 to 2129 (ELTNGTNKTDSTTGQ) has biased composition (polar residues). Residues 2130–2202 (QELENNLTDV…LELATCAVII (73 aa)) enclose the Carrier 3 domain. Serine 2164 carries the O-(pantetheine 4'-phosphoryl)serine modification.

Belongs to the NRP synthetase family.

Nonribosomal peptide synthesis (NRPS) is a key mechanism responsible for the biosynthesis of bioactive metabolites which are potentially contributing to organismal virulence. The protein is Nonribosomal peptide synthetase 5 (NRPS5) of Aspergillus fumigatus (strain ATCC MYA-4609 / CBS 101355 / FGSC A1100 / Af293) (Neosartorya fumigata).